Consider the following 563-residue polypeptide: Sulfite reductase [NADPH] hemoprotein beta-component (563 aa).

The [4Fe-4S] cluster site is built by Cys426, Cys432, Cys472, and Cys476. Cys476 is a siroheme binding site.

This sequence belongs to the nitrite and sulfite reductase 4Fe-4S domain family. In terms of assembly, alpha(8)-beta(8). The alpha component is a flavoprotein, the beta component is a hemoprotein. The cofactor is siroheme. [4Fe-4S] cluster serves as cofactor.

It catalyses the reaction hydrogen sulfide + 3 NADP(+) + 3 H2O = sulfite + 3 NADPH + 4 H(+). It participates in sulfur metabolism; hydrogen sulfide biosynthesis; hydrogen sulfide from sulfite (NADPH route): step 1/1. Component of the sulfite reductase complex that catalyzes the 6-electron reduction of sulfite to sulfide. This is one of several activities required for the biosynthesis of L-cysteine from sulfate. In Photobacterium profundum (strain SS9), this protein is Sulfite reductase [NADPH] hemoprotein beta-component.